The sequence spans 1030 residues: Germ cell nuclear acidic protein (1030 aa).

Disordered regions lie at residues 1-59 (MADH…TEDT), 196-245 (EWNG…TQLA), 266-361 (KRLA…VSSI), 375-433 (TMES…EQFL), 457-594 (LKRS…DLTY), and 699-764 (KLGI…PVAS). Over residues 20 to 33 (APKDHPEKRNDQKT) the composition is skewed to basic and acidic residues. Polar residues-rich tracts occupy residues 298-316 (EPNT…TIHN) and 329-349 (ETSS…STSG). A compositionally biased stretch (polar residues) spans 505 to 516 (LRTNQTPLNSTR). 2 stretches are compositionally biased toward basic and acidic residues: residues 541–553 (NHID…KLID) and 578–594 (DSDK…DLTY). Low complexity predominate over residues 720–748 (TPKTAPPKGTAPPKTSAPPKVSTPPKSTK).

The protein belongs to the serine-aspartate repeat-containing protein (SDr) family.

It localises to the cytoplasm. It is found in the chromosome. Functionally, may play a role in DNA-protein cross-links (DPCs) clearance, ensuring the genomic stability by protecting germ cells and early embryos from various sources of damage. Limits replication stress and DNA double-strand breaks. This is Germ cell nuclear acidic protein from Drosophila melanogaster (Fruit fly).